Here is a 131-residue protein sequence, read N- to C-terminus: Small ribosomal subunit protein uS8 (131 aa).

The protein belongs to the universal ribosomal protein uS8 family. Part of the 30S ribosomal subunit. Contacts proteins S5 and S12.

Its function is as follows. One of the primary rRNA binding proteins, it binds directly to 16S rRNA central domain where it helps coordinate assembly of the platform of the 30S subunit. The chain is Small ribosomal subunit protein uS8 from Bacteroides thetaiotaomicron (strain ATCC 29148 / DSM 2079 / JCM 5827 / CCUG 10774 / NCTC 10582 / VPI-5482 / E50).